The sequence spans 946 residues: Rho GTPase-activating protein 4 (946 aa).

One can recognise an F-BAR domain in the interval Thr-19 to Asp-317. Residues Leu-128–Arg-195 are a coiled coil. Residues Glu-187 to Ala-196 show a composition bias toward basic and acidic residues. Disordered regions lie at residues Glu-187 to Lys-220 and Leu-402 to Glu-435. Composition is skewed to low complexity over residues Thr-202–Gly-211 and Thr-407–Ser-419. Residues Gly-507–Phe-695 form the Rho-GAP domain. The SH3 domain maps to Glu-746 to Gly-805. Ser-860, Ser-901, and Ser-906 each carry phosphoserine. Residues Lys-885–His-946 are disordered. Pro residues predominate over residues Ser-901–Pro-910. A compositionally biased stretch (low complexity) spans Gly-924–Ser-934.

Interacts with NCKAP1L. Predominantly in hematopoietic cells (spleen, thymus and leukocytes); low levels in placenta, lung and various fetal tissues.

It localises to the cytoplasm. Functionally, inhibitory effect on stress fiber organization. May down-regulate Rho-like GTPase in hematopoietic cells. In Homo sapiens (Human), this protein is Rho GTPase-activating protein 4.